Reading from the N-terminus, the 327-residue chain is DNA-directed RNA polymerase subunit alpha (327 aa).

The tract at residues 1–233 is alpha N-terminal domain (alpha-NTD); that stretch reads MQNSASEFLK…DQLSIFADLQ (233 aa). Residues 247 to 327 are alpha C-terminal domain (alpha-CTD); that stretch reads VDPILLRPVD…NWPPAGLEKP (81 aa).

It belongs to the RNA polymerase alpha chain family. As to quaternary structure, homodimer. The RNAP catalytic core consists of 2 alpha, 1 beta, 1 beta' and 1 omega subunit. When a sigma factor is associated with the core the holoenzyme is formed, which can initiate transcription.

It carries out the reaction RNA(n) + a ribonucleoside 5'-triphosphate = RNA(n+1) + diphosphate. DNA-dependent RNA polymerase catalyzes the transcription of DNA into RNA using the four ribonucleoside triphosphates as substrates. The protein is DNA-directed RNA polymerase subunit alpha of Laribacter hongkongensis (strain HLHK9).